We begin with the raw amino-acid sequence, 365 residues long: tRNA dimethylallyltransferase (365 aa).

ATP is bound at residue 23 to 30; it reads APTASGKT. 25-30 contributes to the substrate binding site; it reads TASGKT. 3 interaction with substrate tRNA regions span residues 48–51, 172–176, and 256–261; these read DSAL, QRITR, and RCVGYR.

The protein belongs to the IPP transferase family. As to quaternary structure, monomer. Mg(2+) is required as a cofactor.

The enzyme catalyses adenosine(37) in tRNA + dimethylallyl diphosphate = N(6)-dimethylallyladenosine(37) in tRNA + diphosphate. Its function is as follows. Catalyzes the transfer of a dimethylallyl group onto the adenine at position 37 in tRNAs that read codons beginning with uridine, leading to the formation of N6-(dimethylallyl)adenosine (i(6)A). The sequence is that of tRNA dimethylallyltransferase from Psychrobacter sp. (strain PRwf-1).